Here is a 449-residue protein sequence, read N- to C-terminus: VIRF-1 (449 aa).

The interval 1–60 is disordered; the sequence is MDPGQRPNPFGAPGAIPKKPCLSQGSPGTSGSGAPCDEPSRSESPGEGPSGTGGSAAAGD. The IRF tryptophan pentad repeat DNA-binding region spans 89–195; sequence KASIKDWIVC…HHFLVFRVRK (107 aa). N6-propionyllysine; by host is present on residues K406 and K442.

Belongs to the IRF family. In terms of assembly, forms homodimers. Interacts with host IRF3, IRF7, and CREBBP. Interacts with host SYNCRIP. Interacts with host USP7. Interacts (via C-terminus) with host HERC5. Interacts with host GABARAPL1. Interacts with host SIRT6. ISGylated. In terms of processing, propionylated in lysine residues Lys-406 and Lys-442, which is required for effective inhibition of IFN-beta production and antiviral signaling.

The protein resides in the host cytoplasm. Plays a role in the inhibition of host innate response by repressing the expression of interferon-inducible genes and blocking host IRF1- and IRF3-mediated transcription. Blocks the interaction between host IRF3 and CREBBP. Regulates the host cellular metabolism by increasing glucose uptake, ATP production and lactate secretion through down-regulation of heterogeneous nuclear ribonuclear protein Q1/SYNCRIP. Mechanistically, induces ubiquitination and degradation of SYNCRIP through the ubiquitin-proteasome pathway by recruiting KLHL3/CUL3 ubiquitin ligase complex. Disrupts host TP53 signaling pathway during viral infection by interacting with host USP7 and thereby decreasing the availability of USP7 for deubiquitinating and stabilizing TP53. Plays a role in the global inhibition of protein ISGylation by interacting with host HERC5 leading to its inhibition. Promotes its own propionylation by blocking SIRT6 interaction with ubiquitin-specific peptidase 10/USP10 leading to SIRT6 degradation via a ubiquitin-proteasome pathway. In turn, propionylation is required to block IRF3-CBP/p300 recruitment and to repress the STING DNA sensing pathway. Plays a role in the activation of mitophagy during infection via interaction with the host proteins NIX/BNIP3L, TUFM and GABARAPL1 thereby inhibiting antiviral responses and contributing to productive replication. The protein is VIRF-1 (vIRF-1) of Homo sapiens (Human).